A 274-amino-acid chain; its full sequence is uncharacterized protein (274 aa).

An N-terminal signal peptide occupies residues 1–30; that stretch reads MTIDTPAREDQTLAATHRAMWALGDYALMA.

This sequence to M.tuberculosis Rv1403c.

This is an uncharacterized protein from Mycobacterium bovis (strain ATCC BAA-935 / AF2122/97).